Consider the following 183-residue polypeptide: Large ribosomal subunit protein uL6 (183 aa).

It belongs to the universal ribosomal protein uL6 family. Part of the 50S ribosomal subunit.

This protein binds to the 23S rRNA, and is important in its secondary structure. It is located near the subunit interface in the base of the L7/L12 stalk, and near the tRNA binding site of the peptidyltransferase center. The protein is Large ribosomal subunit protein uL6 of Chlamydia pneumoniae (Chlamydophila pneumoniae).